The chain runs to 481 residues: MQWEVVIGLEIHTQLATQSKIFSGSATTFGSEPNTQASLVDLGMPGVLPVLNQEAVRMAVMFGLAIDAEIGQHNVFARKNYFYPDLPKGYQISQMELPIVGKGYLDIPLEDGTIKRVGVTRAHLEEDAGKSLHEEFNGATGIDLNRAGTPLLEIVSEPDMRSAKEAVAYVKTIHALVRYLGICDGNMAEGSLRCDCNVSVRPKGQAEYGTRCEIKNVNSFRFIEKAINTEVRRQIELIEDGGKVIQQTRLYDPNKDETRAMRSKEEANDYRYFPDPDLLPVVIEDSFLNDIRATLPELPPQKRERFQAQFGLSVYDASVLASSREQADYFEKVVSIAGDAKLAANWVMVELGSLLNKQGLEIDEAPVTAEQLGGMLLRIKDNTISGKIAKTVFEAMASGEGSADEIIEKRGLKQVTDSGAISAVLDEMLAANAEQVKQYRAADEAKRGKMFGFFVGQAMKASKGKANPQQVNELLKSKLEG.

Belongs to the GatB/GatE family. GatB subfamily. As to quaternary structure, heterotrimer of A, B and C subunits.

It carries out the reaction L-glutamyl-tRNA(Gln) + L-glutamine + ATP + H2O = L-glutaminyl-tRNA(Gln) + L-glutamate + ADP + phosphate + H(+). The enzyme catalyses L-aspartyl-tRNA(Asn) + L-glutamine + ATP + H2O = L-asparaginyl-tRNA(Asn) + L-glutamate + ADP + phosphate + 2 H(+). Its function is as follows. Allows the formation of correctly charged Asn-tRNA(Asn) or Gln-tRNA(Gln) through the transamidation of misacylated Asp-tRNA(Asn) or Glu-tRNA(Gln) in organisms which lack either or both of asparaginyl-tRNA or glutaminyl-tRNA synthetases. The reaction takes place in the presence of glutamine and ATP through an activated phospho-Asp-tRNA(Asn) or phospho-Glu-tRNA(Gln). This chain is Aspartyl/glutamyl-tRNA(Asn/Gln) amidotransferase subunit B, found in Pseudomonas fluorescens (strain SBW25).